Consider the following 648-residue polypeptide: Biosynthetic arginine decarboxylase (648 aa).

Lys109 is modified (N6-(pyridoxal phosphate)lysine). 291–301 (IDVGGGLGIDF) is a substrate binding site.

The protein belongs to the Orn/Lys/Arg decarboxylase class-II family. SpeA subfamily. It depends on Mg(2+) as a cofactor. Pyridoxal 5'-phosphate serves as cofactor.

It catalyses the reaction L-arginine + H(+) = agmatine + CO2. It functions in the pathway amine and polyamine biosynthesis; agmatine biosynthesis; agmatine from L-arginine: step 1/1. In terms of biological role, catalyzes the biosynthesis of agmatine from arginine. This chain is Biosynthetic arginine decarboxylase, found in Prochlorococcus marinus (strain MIT 9301).